A 119-amino-acid chain; its full sequence is Ribonuclease P protein component (119 aa).

Belongs to the RnpA family. Consists of a catalytic RNA component (M1 or rnpB) and a protein subunit.

The catalysed reaction is Endonucleolytic cleavage of RNA, removing 5'-extranucleotides from tRNA precursor.. In terms of biological role, RNaseP catalyzes the removal of the 5'-leader sequence from pre-tRNA to produce the mature 5'-terminus. It can also cleave other RNA substrates such as 4.5S RNA. The protein component plays an auxiliary but essential role in vivo by binding to the 5'-leader sequence and broadening the substrate specificity of the ribozyme. This is Ribonuclease P protein component from Halalkalibacterium halodurans (strain ATCC BAA-125 / DSM 18197 / FERM 7344 / JCM 9153 / C-125) (Bacillus halodurans).